The sequence spans 349 residues: NADH-quinone oxidoreductase subunit H (349 aa).

8 consecutive transmembrane segments (helical) span residues 16–36 (WPVV…MGCV), 88–108 (GLFI…WAVV), 123–143 (LLFL…AGWA), 157–177 (AAQM…VLLI), 202–222 (FLSW…ISGI), 264–284 (ILVS…PVGF), 285–305 (LPDG…IFLW), and 325–345 (VFIP…MSPL).

Belongs to the complex I subunit 1 family. In terms of assembly, NDH-1 is composed of 14 different subunits. Subunits NuoA, H, J, K, L, M, N constitute the membrane sector of the complex.

It localises to the cell inner membrane. It carries out the reaction a quinone + NADH + 5 H(+)(in) = a quinol + NAD(+) + 4 H(+)(out). In terms of biological role, NDH-1 shuttles electrons from NADH, via FMN and iron-sulfur (Fe-S) centers, to quinones in the respiratory chain. The immediate electron acceptor for the enzyme in this species is believed to be ubiquinone. Couples the redox reaction to proton translocation (for every two electrons transferred, four hydrogen ions are translocated across the cytoplasmic membrane), and thus conserves the redox energy in a proton gradient. This subunit may bind ubiquinone. In Azoarcus sp. (strain BH72), this protein is NADH-quinone oxidoreductase subunit H.